Reading from the N-terminus, the 336-residue chain is Dihydroorotate dehydrogenase (quinone) (336 aa).

FMN contacts are provided by residues 62-66 and Thr86; that span reads AGLDK. Lys66 is a binding site for substrate. Residue 111-115 coordinates substrate; that stretch reads NRMGF. FMN-binding residues include Asn139 and Asn172. Asn172 is a binding site for substrate. The Nucleophile role is filled by Ser175. Residue Asn177 participates in substrate binding. Positions 217 and 245 each coordinate FMN. 246-247 serves as a coordination point for substrate; sequence NT. Residues Gly268, Gly297, and 318–319 contribute to the FMN site; that span reads YS.

It belongs to the dihydroorotate dehydrogenase family. Type 2 subfamily. In terms of assembly, monomer. Requires FMN as cofactor.

It is found in the cell membrane. The catalysed reaction is (S)-dihydroorotate + a quinone = orotate + a quinol. The protein operates within pyrimidine metabolism; UMP biosynthesis via de novo pathway; orotate from (S)-dihydroorotate (quinone route): step 1/1. Catalyzes the conversion of dihydroorotate to orotate with quinone as electron acceptor. In Klebsiella pneumoniae (strain 342), this protein is Dihydroorotate dehydrogenase (quinone).